We begin with the raw amino-acid sequence, 145 residues long: 3-dehydroquinate dehydratase (145 aa).

The Proton acceptor role is filled by Tyr-24. Substrate contacts are provided by Asn-75, His-81, and Asp-88. Residue His-101 is the Proton donor of the active site. Residues 102–103 (LS) and Arg-112 contribute to the substrate site.

This sequence belongs to the type-II 3-dehydroquinase family. As to quaternary structure, homododecamer.

The enzyme catalyses 3-dehydroquinate = 3-dehydroshikimate + H2O. It functions in the pathway metabolic intermediate biosynthesis; chorismate biosynthesis; chorismate from D-erythrose 4-phosphate and phosphoenolpyruvate: step 3/7. Functionally, catalyzes a trans-dehydration via an enolate intermediate. The sequence is that of 3-dehydroquinate dehydratase from Phenylobacterium zucineum (strain HLK1).